We begin with the raw amino-acid sequence, 327 residues long: Transaldolase (327 aa).

K132 serves as the catalytic Schiff-base intermediate with substrate.

It belongs to the transaldolase family. Type 1 subfamily. As to quaternary structure, homodimer.

It is found in the cytoplasm. The catalysed reaction is D-sedoheptulose 7-phosphate + D-glyceraldehyde 3-phosphate = D-erythrose 4-phosphate + beta-D-fructose 6-phosphate. It functions in the pathway carbohydrate degradation; pentose phosphate pathway; D-glyceraldehyde 3-phosphate and beta-D-fructose 6-phosphate from D-ribose 5-phosphate and D-xylulose 5-phosphate (non-oxidative stage): step 2/3. In terms of biological role, transaldolase is important for the balance of metabolites in the pentose-phosphate pathway. The sequence is that of Transaldolase from Chlamydia caviae (strain ATCC VR-813 / DSM 19441 / 03DC25 / GPIC) (Chlamydophila caviae).